Reading from the N-terminus, the 154-residue chain is Small ribosomal subunit protein uS13m (154 aa).

The N-terminal 30 residues, 1–30 (MLGLRRSATTLFDISQSLLRNVTFHGLRVQ), are a transit peptide targeting the mitochondrion. The tract at residues 121-154 (RHGLPCRGQRTSTNARTKKGKAVAIAGKKKAPRK) is disordered. Residues 136–154 (RTKKGKAVAIAGKKKAPRK) are compositionally biased toward basic residues.

Belongs to the universal ribosomal protein uS13 family. Part of the small ribosomal subunit.

Its subcellular location is the mitochondrion. Located at the top of the head of the small subunit, it contacts several helices of the 18S rRNA. The sequence is that of Small ribosomal subunit protein uS13m (RPS13) from Arabidopsis thaliana (Mouse-ear cress).